The chain runs to 512 residues: 2,3-bisphosphoglycerate-independent phosphoglycerate mutase (512 aa).

Mn(2+)-binding residues include aspartate 11 and serine 61. The Phosphoserine intermediate role is filled by serine 61. Residues histidine 122, 152-153, arginine 184, arginine 190, 259-262, and lysine 332 contribute to the substrate site; these read RD and RADR. The Mn(2+) site is built by aspartate 399, histidine 403, aspartate 440, histidine 441, and histidine 459.

The protein belongs to the BPG-independent phosphoglycerate mutase family. Monomer. Mn(2+) serves as cofactor.

The catalysed reaction is (2R)-2-phosphoglycerate = (2R)-3-phosphoglycerate. The protein operates within carbohydrate degradation; glycolysis; pyruvate from D-glyceraldehyde 3-phosphate: step 3/5. Functionally, catalyzes the interconversion of 2-phosphoglycerate and 3-phosphoglycerate. The sequence is that of 2,3-bisphosphoglycerate-independent phosphoglycerate mutase from Francisella tularensis subsp. tularensis (strain FSC 198).